The sequence spans 134 residues: MSDLYRFGISLERKLIESFDRHIKAQGYQSRSEALRDLIREELLRKTTAEGGLVAGAIVMTYDHHKRDLVNRLIDIQHDFHDLIISTQHVHLDHENCLEVIAVKGNAPEIEKLSSALKVLVGVKHLDLSLSSAD.

Ni(2+)-binding residues include His78, His89, His91, and Cys97.

This sequence belongs to the transcriptional regulatory CopG/NikR family. Ni(2+) is required as a cofactor.

In terms of biological role, transcriptional regulator. In Chlorobaculum tepidum (strain ATCC 49652 / DSM 12025 / NBRC 103806 / TLS) (Chlorobium tepidum), this protein is Putative nickel-responsive regulator.